Here is an 81-residue protein sequence, read N- to C-terminus: Photosystem I iron-sulfur center (81 aa).

4Fe-4S ferredoxin-type domains follow at residues 2-31 (AHSV…MIPW) and 39-68 (IASA…VRVY). 8 residues coordinate [4Fe-4S] cluster: Cys-11, Cys-14, Cys-17, Cys-21, Cys-48, Cys-51, Cys-54, and Cys-58.

The eukaryotic PSI reaction center is composed of at least 11 subunits. It depends on [4Fe-4S] cluster as a cofactor.

Its subcellular location is the plastid. The protein localises to the chloroplast thylakoid membrane. The enzyme catalyses reduced [plastocyanin] + hnu + oxidized [2Fe-2S]-[ferredoxin] = oxidized [plastocyanin] + reduced [2Fe-2S]-[ferredoxin]. Functionally, apoprotein for the two 4Fe-4S centers FA and FB of photosystem I (PSI); essential for photochemical activity. FB is the terminal electron acceptor of PSI, donating electrons to ferredoxin. The C-terminus interacts with PsaA/B/D and helps assemble the protein into the PSI complex. Required for binding of PsaD and PsaE to PSI. PSI is a plastocyanin-ferredoxin oxidoreductase, converting photonic excitation into a charge separation, which transfers an electron from the donor P700 chlorophyll pair to the spectroscopically characterized acceptors A0, A1, FX, FA and FB in turn. The chain is Photosystem I iron-sulfur center from Staurastrum punctulatum (Green alga).